A 157-amino-acid chain; its full sequence is Cyclic pyranopterin monophosphate synthase (157 aa).

Substrate contacts are provided by residues 74–76 (MCH) and 112–113 (ME). Residue Asp-127 is part of the active site.

This sequence belongs to the MoaC family. As to quaternary structure, homohexamer; trimer of dimers.

It carries out the reaction (8S)-3',8-cyclo-7,8-dihydroguanosine 5'-triphosphate = cyclic pyranopterin phosphate + diphosphate. It functions in the pathway cofactor biosynthesis; molybdopterin biosynthesis. Functionally, catalyzes the conversion of (8S)-3',8-cyclo-7,8-dihydroguanosine 5'-triphosphate to cyclic pyranopterin monophosphate (cPMP). This is Cyclic pyranopterin monophosphate synthase from Sulfurovum sp. (strain NBC37-1).